Reading from the N-terminus, the 195-residue chain is HTH-type transcriptional regulator BetI (195 aa).

In terms of domain architecture, HTH tetR-type spans 8–68 (SIRRRQLIDA…ATMRDITSQL (61 aa)). A DNA-binding region (H-T-H motif) is located at residues 31–50 (TIAQIARRAGVSTGIISHYF).

Its pathway is amine and polyamine biosynthesis; betaine biosynthesis via choline pathway [regulation]. Its function is as follows. Repressor involved in the biosynthesis of the osmoprotectant glycine betaine. It represses transcription of the choline transporter BetT and the genes of BetAB involved in the synthesis of glycine betaine. The sequence is that of HTH-type transcriptional regulator BetI from Escherichia coli (strain SMS-3-5 / SECEC).